A 341-amino-acid polypeptide reads, in one-letter code: Major histocompatibility complex class I-related protein 1 (341 aa).

Positions 1–22 (MGELMAFLLPLIIVLMVKHSDS) are cleaved as a signal peptide. Positions 23–109 (RTHSLRYFRL…KRLQRHYNHS (87 aa)) are alpha-1. The tract at residues 23–201 (RTHSLRYFRL…EYGKDILQRT (179 aa)) is antigen-binding cleft. Topologically, residues 23–302 (RTHSLRYFRL…QESETIPLVM (280 aa)) are extracellular. Tyrosine 29 and arginine 31 together coordinate 8-(9H-purin-6-yl)-2-oxa-8-azabicyclo[3.3.1]nona-3,6-diene-4,6-dicarbaldehyde. Positions 31, 46, and 65 each coordinate 5-(2-oxoethylideneamino)-6-(D-ribitylamino)uracil. Positions 31, 46, and 65 each coordinate 5-(2-oxopropylideneamino)-6-(D-ribitylamino)uracil. 3 residues coordinate 7-hydroxy-6-methyl-8-(1-D-ribityl)lumazine: arginine 31, serine 46, and lysine 65. 8-(9H-purin-6-yl)-2-oxa-8-azabicyclo[3.3.1]nona-3,6-diene-4,6-dicarbaldehyde contacts are provided by lysine 65 and histidine 80. Lysine 65 is a 2-amino-4-oxopteridine-6-carbaldehyde binding site. Lysine 65 contributes to the pyridoxal binding site. Asparagine 107 carries N-linked (GlcNAc...) asparagine glycosylation. The tract at residues 110–201 (GSHTYQRMIG…EYGKDILQRT (92 aa)) is alpha-2. Residue arginine 116 participates in 8-(9H-purin-6-yl)-2-oxa-8-azabicyclo[3.3.1]nona-3,6-diene-4,6-dicarbaldehyde binding. Residues arginine 116, tyrosine 174, and glutamine 175 each coordinate 5-(2-oxoethylideneamino)-6-(D-ribitylamino)uracil. Residues arginine 116, tyrosine 174, and glutamine 175 each contribute to the 5-(2-oxopropylideneamino)-6-(D-ribitylamino)uracil site. Arginine 116, tyrosine 174, and glutamine 175 together coordinate 7-hydroxy-6-methyl-8-(1-D-ribityl)lumazine. Disulfide bonds link cysteine 120/cysteine 183 and cysteine 222/cysteine 278. The alpha-3 stretch occupies residues 202-293 (EPPLVRVNRK…GVHMVLQVPQ (92 aa)). Positions 203–299 (PPLVRVNRKE…QVPQESETIP (97 aa)) constitute an Ig-like C1-type domain. Residues 294-302 (ESETIPLVM) form a connecting peptide region. Residues 303 to 323 (KAVSGSIVLVIVLAGVGVLVW) form a helical membrane-spanning segment. Residues 324–341 (RRRPREQNGAIYLPTPDR) lie on the Cytoplasmic side of the membrane.

Belongs to the MHC class I family. In terms of assembly, heterotrimer that consists of MR1, B2M and metabolite antigen. Major classes of metabolite ligands presented by MR1 include riboflavin-related antigens, pyrimidines and ribityl lumazines, nucleobase adducts and folate derivatives. Forms reversible covalent Schiff base complexes with microbial pyrimidine-based metabolite, which serves as a molecular switch triggering complete folding, stable association with B2M and translocation of the ternary complex from endoplasmic reticulum to the plasma membrane. Alternatively, forms non-Schiff base complexes with ribityl lumazines. On antigen-presenting cells, the ternary complex interacts with TCR on MR1-restricted T cells. Interacts with TAPBP and TAPBPL chaperones in the endoplasmic reticulum. TAPBP associated or not with MHC class I peptide loading complex binds ligand-free MR1 or MR1-B2M complex, providing for stable MR1 pools ready for metabolite antigen processing. TAPBPL interacts with MR1 in a ligand-independent way; this interaction may stabilize MR1 pool and facilitate ligand loading and dissociation. Structurally, MR1-B2M heterodimer adopts a topology similar to classical MHC class I molecules, with alpha-1 and alpha-2 domains of MR1 forming the antigen-binding cleft composed of two alpha-helices resting on a floor of 7-stranded anti-parallel beta-pleated sheet. MR1-B2M heterodimer (via alpha-helices) interacts with TCR (via CDR domains). In terms of processing, N-glycosylated.

The protein localises to the cell membrane. It is found in the endoplasmic reticulum membrane. The protein resides in the golgi apparatus membrane. It localises to the early endosome membrane. Its subcellular location is the late endosome membrane. Antigen-presenting molecule specialized in displaying microbial pyrimidine-based metabolites to alpha-beta T cell receptors (TCR) on innate-type mucosal-associated invariant T (MAIT) cells. In complex with B2M preferentially presents riboflavin-derived metabolites to semi-invariant TCRs on MAIT cells, guiding immune surveillance of the microbial metabolome at mucosal epithelial barriers. Signature pyrimidine-based microbial antigens are generated via non-enzymatic condensation of metabolite intermediates of the riboflavin pathway with by-products arising from other metabolic pathways such as glycolysis. Typical potent antigenic metabolites are 5-(2-oxoethylideneamino)-6-D-ribitylaminouracil (5-OE-RU) and 5-(2-oxopropylideneamino)-6-D-ribitylaminouracil (5-OP-RU), products of condensation of 5-amino-6-D-ribityaminouracil (5-A-RU) with glyoxal or methylglyoxal by-products, respectively. May present microbial antigens to various MAIT cell subsets, providing for unique recognition of diverse microbes, including pathogens that do not synthesize riboflavin. Upon antigen recognition, elicits rapid innate-type MAIT cell activation to eliminate pathogenic microbes by directly killing infected cells. During T cell development, drives thymic selection and post-thymic terminal differentiation of MAIT cells in a process dependent on commensal microflora. Acts as an immune sensor of cancer cell metabolome. May present a tumor-specific or -associated metabolite essential for cancer cell survival to a pan-cancer TCR on a non-MAIT CD8-positive T cell clone, triggering T cell-mediated killing of a wide range of cancer cell types. May present tumor-enriched pyridoxal and pyridoxal 5'-phosphate antigens, enabling preferential recognition of cancer cells. Presents nucleobase carbonyl adducts generated during oxidative stress. Captures M3Ade, a nucleobase adduct composed of one adenine modified by a malondialdehyde trimer, for recognition by MR1-restricted T cell clones expressing a polyclonal TCR repertoire. This Pan troglodytes (Chimpanzee) protein is Major histocompatibility complex class I-related protein 1.